The following is a 449-amino-acid chain: Elongation factor 1-alpha 1 (449 aa).

The tr-type G domain occupies 5 to 230 (KFHINIVVIG…DQINEPKRPS (226 aa)). Residues 14-21 (GHVDSGKS) are G1. Position 14–21 (14–21 (GHVDSGKS)) interacts with GTP. Position 55 is an N6,N6-dimethyllysine (Lys-55). The segment at 70 to 74 (GITID) is G2. Lys-79 bears the N6,N6,N6-trimethyllysine mark. The tract at residues 91-94 (DAPG) is G3. Residues 91–95 (DAPGH) and 153–156 (NKMD) each bind GTP. The segment at 153–156 (NKMD) is G4. At Lys-187 the chain carries N6,N6,N6-trimethyllysine. Positions 194–196 (SGF) are G5. Residue Lys-261 is modified to N6-methyllysine. Lys-306 and Lys-396 each carry N6,N6,N6-trimethyllysine. Glycyl lysine isopeptide (Lys-Gly) (interchain with G-Cter in ubiquitin) cross-links involve residues Lys-438 and Lys-441.

Belongs to the TRAFAC class translation factor GTPase superfamily. Classic translation factor GTPase family. EF-Tu/EF-1A subfamily.

It localises to the cytoplasm. Its function is as follows. This protein promotes the GTP-dependent binding of aminoacyl-tRNA to the A-site of ribosomes during protein biosynthesis. The polypeptide is Elongation factor 1-alpha 1 (A1) (Arabidopsis thaliana (Mouse-ear cress)).